A 153-amino-acid polypeptide reads, in one-letter code: Probable disulfide formation protein (153 aa).

A helical transmembrane segment spans residues 4-23 (DTRLYLAWLVALAATLGSLY). C33 and C36 are joined by a disulfide. 2 consecutive transmembrane segments (helical) span residues 38-57 (AQRIFMYPLAVILGIAAFVG) and 64-81 (YVLPLAALGLGFAIFQNL). The cysteines at positions 93 and 101 are disulfide-linked. Residues 117–139 (RALTIPVLSMIAFALILALLSWP) form a helical membrane-spanning segment.

This sequence belongs to the DsbB family. BdbC subfamily.

It is found in the cell membrane. Functionally, required for disulfide bond formation in some proteins. This Deinococcus radiodurans (strain ATCC 13939 / DSM 20539 / JCM 16871 / CCUG 27074 / LMG 4051 / NBRC 15346 / NCIMB 9279 / VKM B-1422 / R1) protein is Probable disulfide formation protein.